The primary structure comprises 319 residues: Ribosomal RNA small subunit methyltransferase H (319 aa).

S-adenosyl-L-methionine-binding positions include 38 to 40 (GGH), Asp58, Phe82, Asp104, and Gln111.

Belongs to the methyltransferase superfamily. RsmH family.

It localises to the cytoplasm. The enzyme catalyses cytidine(1402) in 16S rRNA + S-adenosyl-L-methionine = N(4)-methylcytidine(1402) in 16S rRNA + S-adenosyl-L-homocysteine + H(+). Specifically methylates the N4 position of cytidine in position 1402 (C1402) of 16S rRNA. This is Ribosomal RNA small subunit methyltransferase H from Histophilus somni (strain 129Pt) (Haemophilus somnus).